A 44-amino-acid polypeptide reads, in one-letter code: Photosystem I reaction center subunit IX (44 aa).

The helical transmembrane segment at 9–29 (FMRSAPIVAAIWISLTAGIII) threads the bilayer.

The protein belongs to the PsaJ family.

The protein resides in the cellular thylakoid membrane. May help in the organization of the PsaE and PsaF subunits. This is Photosystem I reaction center subunit IX from Prochlorococcus marinus (strain MIT 9515).